Consider the following 130-residue polypeptide: uncharacterized protein (130 aa).

The signal sequence occupies residues 1–18; sequence MVEVWWSLIGAAVPALIA.

This is an uncharacterized protein from Arabidopsis thaliana (Mouse-ear cress).